The sequence spans 87 residues: Phosphocarrier protein HPr (87 aa).

One can recognise an HPr domain in the interval 2 to 87 (ASKDFHIVAE…NETMTKEGLA (86 aa)). The active-site Pros-phosphohistidine intermediate is the His15. Residue Ser46 is modified to Phosphoserine; by HPrK/P.

The protein belongs to the HPr family.

Its subcellular location is the cytoplasm. Phosphorylation on Ser-46 inhibits the phosphoryl transfer from enzyme I to HPr. In terms of biological role, general (non sugar-specific) component of the phosphoenolpyruvate-dependent sugar phosphotransferase system (sugar PTS). This major carbohydrate active-transport system catalyzes the phosphorylation of incoming sugar substrates concomitantly with their translocation across the cell membrane. The phosphoryl group from phosphoenolpyruvate (PEP) is transferred to the phosphoryl carrier protein HPr by enzyme I. Phospho-HPr then transfers it to the PTS EIIA domain. Functionally, P-Ser-HPr interacts with the catabolite control protein A (CcpA), forming a complex that binds to DNA at the catabolite response elements cre, operator sites preceding a large number of catabolite-regulated genes. Thus, P-Ser-HPr is a corepressor in carbon catabolite repression (CCR), a mechanism that allows bacteria to coordinate and optimize the utilization of available carbon sources. P-Ser-HPr also plays a role in inducer exclusion, in which it probably interacts with several non-PTS permeases and inhibits their transport activity. In Streptococcus mutans serotype c (strain ATCC 700610 / UA159), this protein is Phosphocarrier protein HPr (ptsH).